The sequence spans 495 residues: Cytochrome P450 monooxygenase 113 (495 aa).

The helical transmembrane segment at 2–22 (FLQIAACFTVIGLLYGLVSNL) threads the bilayer. Heme is bound at residue Cys428.

The protein belongs to the cytochrome P450 family. Requires heme as cofactor.

It is found in the membrane. It functions in the pathway secondary metabolite biosynthesis. Its function is as follows. Cytochrome P450 monooxygenase that is able to use 4-ethoxybenzoic acid as a substrate for oxidation. This chain is Cytochrome P450 monooxygenase 113, found in Postia placenta (strain ATCC 44394 / Madison 698-R) (Brown rot fungus).